A 124-amino-acid polypeptide reads, in one-letter code: Small ribosomal subunit protein uS12 (124 aa).

The tract at residues Met-1–Gly-32 is disordered. Asp-89 carries the post-translational modification 3-methylthioaspartic acid. Positions Gln-105–Ser-124 are disordered. The segment covering Lys-108 to Gly-118 has biased composition (basic residues).

The protein belongs to the universal ribosomal protein uS12 family. In terms of assembly, part of the 30S ribosomal subunit. Contacts proteins S8 and S17. May interact with IF1 in the 30S initiation complex.

With S4 and S5 plays an important role in translational accuracy. Its function is as follows. Interacts with and stabilizes bases of the 16S rRNA that are involved in tRNA selection in the A site and with the mRNA backbone. Located at the interface of the 30S and 50S subunits, it traverses the body of the 30S subunit contacting proteins on the other side and probably holding the rRNA structure together. The combined cluster of proteins S8, S12 and S17 appears to hold together the shoulder and platform of the 30S subunit. In Kineococcus radiotolerans (strain ATCC BAA-149 / DSM 14245 / SRS30216), this protein is Small ribosomal subunit protein uS12.